The sequence spans 402 residues: Dual-specificity RNA methyltransferase RlmN (402 aa).

The active-site Proton acceptor is E94. Residues 100 to 351 (EDDRGTLCIS…ATVRKTRGDD (252 aa)) enclose the Radical SAM core domain. C107 and C356 are disulfide-bonded. [4Fe-4S] cluster is bound by residues C114, C118, and C121. Residues 182-183 (GE), S214, 236-238 (SLH), and N313 each bind S-adenosyl-L-methionine. The active-site S-methylcysteine intermediate is the C356.

Belongs to the radical SAM superfamily. RlmN family. It depends on [4Fe-4S] cluster as a cofactor.

Its subcellular location is the cytoplasm. It carries out the reaction adenosine(2503) in 23S rRNA + 2 reduced [2Fe-2S]-[ferredoxin] + 2 S-adenosyl-L-methionine = 2-methyladenosine(2503) in 23S rRNA + 5'-deoxyadenosine + L-methionine + 2 oxidized [2Fe-2S]-[ferredoxin] + S-adenosyl-L-homocysteine. The catalysed reaction is adenosine(37) in tRNA + 2 reduced [2Fe-2S]-[ferredoxin] + 2 S-adenosyl-L-methionine = 2-methyladenosine(37) in tRNA + 5'-deoxyadenosine + L-methionine + 2 oxidized [2Fe-2S]-[ferredoxin] + S-adenosyl-L-homocysteine. In terms of biological role, specifically methylates position 2 of adenine 2503 in 23S rRNA and position 2 of adenine 37 in tRNAs. m2A2503 modification seems to play a crucial role in the proofreading step occurring at the peptidyl transferase center and thus would serve to optimize ribosomal fidelity. In Polynucleobacter asymbioticus (strain DSM 18221 / CIP 109841 / QLW-P1DMWA-1) (Polynucleobacter necessarius subsp. asymbioticus), this protein is Dual-specificity RNA methyltransferase RlmN.